We begin with the raw amino-acid sequence, 606 residues long: Mitogen-activated protein kinase kinase kinase 7 (606 aa).

The interval 1–300 (MSTASAASSS…FPGADEPLQY (300 aa)) is interaction with MAPK8IP1. The 256-residue stretch at 36 to 291 (IEVEEVVGRG…KIMTHLMRYF (256 aa)) folds into the Protein kinase domain. ATP contacts are provided by residues 42 to 50 (VGRGAFGVV) and K63. K72 is covalently cross-linked (Glycyl lysine isopeptide (Lys-Gly) (interchain with G-Cter in ubiquitin)). D156 acts as the Proton acceptor in catalysis. A Glycyl lysine isopeptide (Lys-Gly) (interchain with G-Cter in ubiquitin) cross-link involves residue K158. 2 positions are modified to phosphothreonine; by autocatalysis: T184 and T187. S192 is modified (phosphoserine; by autocatalysis). Residue K209 forms a Glycyl lysine isopeptide (Lys-Gly) (interchain with G-Cter in ubiquitin) linkage. Disordered stretches follow at residues 301–338 (PCQY…MEQV) and 354–391 (KNQA…MSAD). Residues 306–338 (DEGQSNSATSTGSFMDIASTNTSNKSDTNMEQV) are compositionally biased toward polar residues. Over residues 361-375 (SESGRLSLGASRGSS) the composition is skewed to low complexity. 3 positions are modified to phosphoserine: S367, S389, and S439. Positions 443-452 (LTVTGTEPGQ) are enriched in polar residues. A disordered region spans residues 443–493 (LTVTGTEPGQVSSRSSSPSVRMITTSGPTSEKPTRSHPWTPDDSTDTNGSD). The segment covering 453–463 (VSSRSSSPSVR) has biased composition (low complexity). S455 carries the phosphoserine modification. Positions 464–473 (MITTSGPTSE) are enriched in polar residues.

Belongs to the protein kinase superfamily. STE Ser/Thr protein kinase family. MAP kinase kinase kinase subfamily. Can form homodimer. Binds both upstream activators and downstream substrates in multimolecular complexes. Interacts with TAB1/MAP3K7IP1, TAB2/MAP3K7IP2 and TAB3/MAP3K7IP3. Identified in the TRIKA2 complex composed of MAP3K7/TAK1, TAB1/MAP3K7IP1 and TAB2/MAP3K7IP2. Interacts with PPM1L and PPM1B/PP2CB. Interaction with PP2A and PPP6C leads to its repressed activity. Interacts with TRAF6 and TAB1/MAP3K7IP1; during IL-1 signaling. Interacts with TAOK1 and TAOK2; interaction with TAOK2 interferes with MAP3K7 interaction with IKKA, thus preventing NF-kappa-B activation. Interacts with DYNC2I2 (via WD domains). Interacts with CYLD and RBCK1. Interacts with TGFBR1; induces MAP3K7/TAK1 activation by TRAF6. Interacts with MAPK8IP1 and SMAD6. Interacts with isoform 1 of VRK2. Interacts with DAB2; the interaction is induced by TGF-beta stimulation and may mediate TGF-beta stimulated JNK activation. Interacts with TRIM5. Part of a complex containing ITCH, NDFIP1 and MAP3K7. Interacts with IFIT5; the interaction synergizes the recruitment of IKK to MAP3K7 and enhances IKK phosphorylation. Interacts with PLEKHM1 (via N- and C-terminus). Found in a complex with SH3RF1, RAC2, MAP2K7/MKK7, MAPK8IP1/JIP1, MAPK8/JNK1 and MAPK9/JNK2. Interacts with SASH1. Interacts with RIPK1. The cofactor is Mg(2+). Association with TAB1/MAP3K7IP1 promotes autophosphorylation at Ser-192 and subsequent activation. Association with TAB2/MAP3K7IP2, itself associated with free unanchored Lys-63 polyubiquitin chain, promotes autophosphorylation and subsequent activation of MAP3K7. Dephosphorylation at Ser-192 by PPM1B/PP2CB and at Thr-187 by PP2A and PPP6C leads to inactivation. In terms of processing, 'Lys-48'-linked polyubiquitination at Lys-72 is induced by TNFalpha, and leads to proteasomal degradation. Undergoes 'Lys-48'-linked polyubiquitination catalyzed by ITCH. 'Lys-63'-linked polyubiquitination at Lys-158 by TRIM8 does not lead to proteasomal degradation but contributes to autophosphorylation and activation. Deubiquitinated by CYLD, a protease that selectively cleaves 'Lys-63'-linked ubiquitin chains. Deubiquitinated by USP19; leading to negative regulation of TNF-alpha- and IL-1beta-triggered NF-kappa-B activation.

Its subcellular location is the cytoplasm. It localises to the cell membrane. It catalyses the reaction L-seryl-[protein] + ATP = O-phospho-L-seryl-[protein] + ADP + H(+). It carries out the reaction L-threonyl-[protein] + ATP = O-phospho-L-threonyl-[protein] + ADP + H(+). Activated by pro-inflammatory cytokines and in response to physical and chemical stresses, including osmotic stress, oxidative stress, arsenic and ultraviolet light irradiation. Activated by 'Lys-63'-linked polyubiquitination and by autophosphorylation. Association with TAB1/MAP3K7IP1 and TAB2/MAP3K7IP2 promotes activation through autophosphorylation, whereas PPM1B/PP2CB, PP2A and PPP6C dephosphorylation leads to inactivation. Ceramides are also able to activate MAP3K7/TAK1. Functionally, serine/threonine kinase which acts as an essential component of the MAP kinase signal transduction pathway. Plays an important role in the cascades of cellular responses evoked by changes in the environment. Mediates signal transduction of TRAF6, various cytokines including interleukin-1 (IL-1), transforming growth factor-beta (TGFB), TGFB-related factors like BMP2 and BMP4, toll-like receptors (TLR), tumor necrosis factor receptor CD40 and B-cell receptor (BCR). Once activated, acts as an upstream activator of the MKK/JNK signal transduction cascade and the p38 MAPK signal transduction cascade through the phosphorylation and activation of several MAP kinase kinases like MAP2K1/MEK1, MAP2K3/MKK3, MAP2K6/MKK6 and MAP2K7/MKK7. These MAP2Ks in turn activate p38 MAPKs and c-jun N-terminal kinases (JNKs); both p38 MAPK and JNK pathways control the transcription factors activator protein-1 (AP-1). Independently of MAP2Ks and p38 MAPKs, acts as a key activator of NF-kappa-B by promoting activation of the I-kappa-B-kinase (IKK) core complex. Mechanistically, recruited to polyubiquitin chains of RIPK2 and IKBKG/NEMO via TAB2/MAP3K7IP2 and TAB3/MAP3K7IP3, and catalyzes phosphorylation and activation of IKBKB/IKKB component of the IKK complex, leading to NF-kappa-B activation. In osmotic stress signaling, plays a major role in the activation of MAPK8/JNK1, but not that of NF-kappa-B. Promotes TRIM5 capsid-specific restriction activity. Phosphorylates RIPK1 at 'Ser-321' which positively regulates RIPK1 interaction with RIPK3 to promote necroptosis but negatively regulates RIPK1 kinase activity and its interaction with FADD to mediate apoptosis. Phosphorylates STING1 in response to cGAMP-activation, promoting association between STEEP1 and STING1 and STING1 translocation to COPII vesicles. The chain is Mitogen-activated protein kinase kinase kinase 7 (MAP3K7) from Pongo abelii (Sumatran orangutan).